A 934-amino-acid chain; its full sequence is Complement component C6 (934 aa).

A signal peptide spans 1–21; it reads MTRHLTLCFILLVMLIDKSEA. Disulfide bonds link Cys22–Cys61, Cys24–Cys65, Cys35–Cys73, Cys39–Cys78, Cys82–Cys117, Cys93–Cys127, Cys96–Cys133, Cys140–Cys151, Cys146–Cys164, Cys158–Cys173, and Cys180–Cys218. 2 TSP type-1 domains span residues 22–79 and 81–134; these read CFCD…QTCP and NCVL…KLCK. The LDL-receptor class A domain occupies 138–175; sequence TNCKNKFLCDSGRCIPSKLECNGENDCGDNSDERNCGR. The Ca(2+) site is built by Leu156, Asn159, Glu161, Asp163, Asp169, and Glu170. The MACPF domain occupies 176 to 522; the sequence is TKPVCTRIYT…EYAAKFDPCQ (347 aa). A beta stranded membrane pass occupies residues 278–290; sequence FFPIPIFHFSEKN. An N-linked (GlcNAc...) asparagine glycan is attached at Asn324. 16 disulfide bridges follow: Cys399/Cys420, Cys499/Cys623, Cys521/Cys570, Cys523/Cys539, Cys526/Cys541, Cys543/Cys552, Cys577/Cys611, Cys589/Cys601, Cys644/Cys686, Cys672/Cys699, Cys704/Cys746, Cys732/Cys761, Cys773/Cys823, Cys784/Cys801, Cys786/Cys837, and Cys793/Cys816. Residues 402 to 415 form a beta stranded membrane-spanning segment; the sequence is YETKKLKFLYMEIH. The region spanning 523–553 is the EGF-like domain; that stretch reads CAPCPNNGRPRLSGTECLCVCQSGTYGENCE. In terms of domain architecture, TSP type-1 3 spans 565–612; it reads DGNWGCWSSWSACNAAYRRSRTRECNNPAPQRGGQSCGGKDQQEEDCT. 2 CCP regions span residues 611-688 and 689-765; these read CTVS…RCLP and DRTW…EQAI. Sushi domains are found at residues 642 to 701 and 702 to 763; these read SGCS…ECQR and TSCL…TCEQ. Residues 642 to 934 are C5b-binding domain; it reads SGCSQPPLPE…EILNPGRCPD (293 aa). A factor I module (FIM) 1 region spans residues 766-840; the sequence is LTKSKDLCPP…FVHSGSCQEG (75 aa). In terms of domain architecture, Kazal-like 1 spans 785–839; that stretch reads ICMSPEEDCSAYSEDLCIFDGGSSQYFTSSACKFLAGKCLNNTQSHFVHSGSCQE. Asn825, Asn855, and Asn872 each carry an N-linked (GlcNAc...) asparagine glycan. A factor I module (FIM) 2 region spans residues 858–934; sequence KRVSCGYNTC…EILNPGRCPD (77 aa). Intrachain disulfides connect Cys862–Cys873, Cys867–Cys919, Cys880–Cys897, Cys882–Cys932, and Cys888–Cys912. A Kazal-like 2 domain is found at 876 to 934; it reads HTSNCVCLLPPQCSKDENQLYCVKIGSSMREKTVNICTLGAVRCANIKVEILNPGRCPD.

This sequence belongs to the complement C6/C7/C8/C9 family. As to quaternary structure, component of the membrane attack complex (MAC), composed of complement C5b, C6, C7, C8A, C8B, C8G and multiple copies of the pore-forming subunit C9. All cysteine residues are assumed to be cross-linked to one another. Individual modules containing an even number of conserved cysteine residues are supposed to have disulfide linkages only within the same module.

The protein resides in the secreted. It localises to the target cell membrane. Membrane attack complex (MAC) assembly is inhibited by CD59, thereby protecting self-cells from damage during complement activation. MAC assembly is also inhibited by clusterin (CLU) chaperones that inhibit polymerization of C9. Component of the membrane attack complex (MAC), a multiprotein complex activated by the complement cascade, which inserts into a target cell membrane and forms a pore, leading to target cell membrane rupture and cell lysis. The MAC is initiated by proteolytic cleavage of C5 into complement C5b in response to the classical, alternative, lectin and GZMK complement pathways. The complement pathways consist in a cascade of proteins that leads to phagocytosis and breakdown of pathogens and signaling that strengthens the adaptive immune system. Together with component C5b, involved in MAC complex assembly: complement C5b and C6 associate with the outer leaflet of target cell membrane, reducing the energy for membrane bending. This chain is Complement component C6, found in Mus musculus (Mouse).